Here is a 257-residue protein sequence, read N- to C-terminus: Homeobox protein goosecoid (257 aa).

The segment at residues 160–219 is a DNA-binding region (homeobox); it reads KRRHRTIFTDEQLEALENLFQETKYPDVGTREQLARKVHLREEKVEVWFKNRRAKWRRQK. Positions 213-257 are disordered; the sequence is AKWRRQKRSSSEESENAEKWNKTSSSKASPEKREEEGKSDLDSDS. Positions 241 to 257 are enriched in basic and acidic residues; it reads SPEKREEEGKSDLDSDS.

This sequence belongs to the paired homeobox family. Bicoid subfamily.

The protein localises to the nucleus. Functionally, regulates chordin (CHRD). May play a role in spatial programing within discrete embryonic fields or lineage compartments during organogenesis. In concert with NKX3-2, plays a role in defining the structural components of the middle ear; required for the development of the entire tympanic ring. Probably involved in the regulatory networks that define neural crest cell fate specification and determine mesoderm cell lineages in mammals. This Homo sapiens (Human) protein is Homeobox protein goosecoid (GSC).